A 1816-amino-acid chain; its full sequence is Kinesin-like protein KIF1B (1816 aa).

At S2 the chain carries N-acetylserine. In terms of domain architecture, Kinesin motor spans 5-354 (SVKVAVRVRP…LRYADRAKQI (350 aa)). Residue 97–104 (GQTGAGKS) participates in ATP binding. The interval 270-350 (NINKSLTTLG…TLSTLRYADR (81 aa)) is interaction with KIFBP. Positions 431 to 450 (FSTASMGSLTSSPSSCSLNS) are disordered. A compositionally biased stretch (low complexity) spans 432–450 (STASMGSLTSSPSSCSLNS). Positions 470 to 512 (GEEAIERLKESEKIIAELNETWEEKLRKTEAIRMEREALLAEM) form a coiled coil. One can recognise an FHA domain in the interval 556–612 (TRVGQADAERRQDIVLSGAHIKEEHCIFRSERNNTGEVIVTLEPCERSETYVNGKRV). A phosphothreonine mark is found at T647 and T652. Positions 672 to 731 (IDMKQEMEKRLQEMEILYKREKEEADLLLEQQRLDYESKLQALQKQVETRSLAAETTEEE) form a coiled coil. Residues S1054, S1057, S1416, S1454, and S1487 each carry the phosphoserine modification. Positions 1550-1570 (STTTFESAITPSESSGYDSAD) are disordered. Phosphoserine is present on residues S1573, S1603, S1610, and S1613. Residues 1620–1637 (SVSSFSSSTLTPSSTCPS) are compositionally biased toward low complexity. A disordered region spans residues 1620-1659 (SVSSFSSSTLTPSSTCPSLVDSRSSSMDQKTPEANSRASS). Over residues 1640 to 1659 (DSRSSSMDQKTPEANSRASS) the composition is skewed to polar residues. The PH domain occupies 1701-1799 (VVSKKGYLHF…WLYAFNPLLA (99 aa)).

The protein belongs to the TRAFAC class myosin-kinesin ATPase superfamily. Kinesin family. Unc-104 subfamily. Monomer. Interacts with KIFBP; positively regulates KIF1B microtubule motor activity. Interacts (via C-terminus end of the kinesin-motor domain) with CHP1; the interaction occurs in a calcium-dependent manner. Interacts with MADD (via death domain); links this isoform of KIF1B to Rab3-carrying vesicles in anterograde synaptic vesicle transport. In terms of tissue distribution, expressed in the brain with lower expression in testis and liver (at protein level). Strongly expressed in the brain and ovary, with lower expression in lung, kidney, uterus, testis and liver. As to expression, isoform 2 is expressed in non-neuronal tissues.

It localises to the cytoplasm. The protein localises to the cytoskeleton. It is found in the cytoplasmic vesicle. The protein resides in the secretory vesicle. Its subcellular location is the synaptic vesicle membrane. It localises to the lysosome. It carries out the reaction ATP + H2O + a kinesin associated with a microtubule at position (n) = ADP + phosphate a kinesin associated with a microtubule at position (n+1, toward the plus end).. Its function is as follows. Has a plus-end-directed microtubule motor activity and functions as a motor for transport of vesicles and organelles along microtubules. Has a plus-end-directed microtubule motor activity and functions as a motor for anterograde synaptic vesicle transport along axonal microtubules from the cell body to the presynapse in neuronal cells. In terms of biological role, has a plus-end-directed microtubule motor activity and functions as a motor for the translocation of lysosomes from perinuclear regions to the cell periphery. This chain is Kinesin-like protein KIF1B, found in Rattus norvegicus (Rat).